Here is a 368-residue protein sequence, read N- to C-terminus: tRNA-specific 2-thiouridylase MnmA (368 aa).

ATP is bound by residues 12–19 and Met-38; that span reads GMSGGVDS. Residues 98–100 are interaction with target base in tRNA; that stretch reads NPD. Catalysis depends on Cys-103, which acts as the Nucleophile. An intrachain disulfide couples Cys-103 to Cys-200. Gly-128 contributes to the ATP binding site. The interaction with tRNA stretch occupies residues 150-152; sequence KDQ. Cys-200 serves as the catalytic Cysteine persulfide intermediate. Positions 311–312 are interaction with tRNA; it reads RY.

This sequence belongs to the MnmA/TRMU family.

It is found in the cytoplasm. The enzyme catalyses S-sulfanyl-L-cysteinyl-[protein] + uridine(34) in tRNA + AH2 + ATP = 2-thiouridine(34) in tRNA + L-cysteinyl-[protein] + A + AMP + diphosphate + H(+). Functionally, catalyzes the 2-thiolation of uridine at the wobble position (U34) of tRNA, leading to the formation of s(2)U34. This Aeromonas hydrophila subsp. hydrophila (strain ATCC 7966 / DSM 30187 / BCRC 13018 / CCUG 14551 / JCM 1027 / KCTC 2358 / NCIMB 9240 / NCTC 8049) protein is tRNA-specific 2-thiouridylase MnmA.